A 304-amino-acid chain; its full sequence is Ribonuclease Z (304 aa).

Zn(2+) is bound by residues His-63, His-65, Asp-67, His-68, His-141, Asp-208, and His-266. Asp-67 acts as the Proton acceptor in catalysis.

Belongs to the RNase Z family. Homodimer. Zn(2+) is required as a cofactor.

The catalysed reaction is Endonucleolytic cleavage of RNA, removing extra 3' nucleotides from tRNA precursor, generating 3' termini of tRNAs. A 3'-hydroxy group is left at the tRNA terminus and a 5'-phosphoryl group is left at the trailer molecule.. In terms of biological role, zinc phosphodiesterase, which displays some tRNA 3'-processing endonuclease activity. Probably involved in tRNA maturation, by removing a 3'-trailer from precursor tRNA. The sequence is that of Ribonuclease Z from Chlamydia trachomatis serovar D (strain ATCC VR-885 / DSM 19411 / UW-3/Cx).